Here is a 261-residue protein sequence, read N- to C-terminus: Claudin-18 (261 aa).

The Cytoplasmic segment spans residues 1–6; that stretch reads MSTTRC. A helical transmembrane segment spans residues 7-27; it reads QVVGFLLSILGLAGCIVATEM. Over 28-80 the chain is Extracellular; that stretch reads DMWSTQDLYDNPVTAVFQYEGLWRSCVQQSSGFTECRPYLTILGLPAMLQAVR. The helical transmembrane segment at 81–101 threads the bilayer; the sequence is ALMIVGIVLSVIGLLVAIFAL. The Cytoplasmic segment spans residues 102-122; it reads KCIRMGNMDDSAKAKMTLTSG. Residues 123–143 form a helical membrane-spanning segment; that stretch reads IMFIIAGLCAIAGVSVFANML. The Extracellular segment spans residues 144 to 174; that stretch reads VTNFWMSTASMFTSMGGMVQTVQTRYTFGAA. A helical transmembrane segment spans residues 175 to 195; the sequence is LFVGWVAGGLTLIGGVLMCIA. A required for role in regulation of RANKL-induced osteoclast differentiation region spans residues 195-261; that stretch reads ACRGLAPEET…QSPPSKYDYV (67 aa). At 196–261 the chain is on the cytoplasmic side; sequence CRGLAPEETN…QSPPSKYDYV (66 aa). Phosphoserine is present on Ser214. The interval 228-261 is disordered; it reads SSGFESNTRNKKIYDGGARTEDEGQSPPSKYDYV. Positions 239-249 are enriched in basic and acidic residues; the sequence is KIYDGGARTED.

It belongs to the claudin family. As to quaternary structure, interacts with TJP2/ZO-2. Interacts with TJP1/ZO-1. Interacts with YAP1 (phosphorylated); the interaction sequesters YAP1 away from the nucleus and thereby restricts transcription of YAP1 target genes. Interacts with CLDN19.

The protein resides in the cell junction. It localises to the tight junction. It is found in the cell membrane. Functionally, involved in alveolar fluid homeostasis via regulation of alveolar epithelial tight junction composition and therefore ion transport and solute permeability, potentially via downstream regulation of the actin cytoskeleton organization and beta-2-adrenergic signaling. Required for lung alveolarization and maintenance of the paracellular alveolar epithelial barrier. Acts to maintain epithelial progenitor cell proliferation and organ size, via regulation of YAP1 localization away from the nucleus and thereby restriction of YAP1 target gene transcription. Acts as a negative regulator of RANKL-induced osteoclast differentiation, potentially via relocation of TJP2/ZO-2 away from the nucleus, subsequently involved in bone resorption in response to calcium deficiency. Mediates the osteoprotective effects of estrogen, potentially via acting downstream of estrogen signaling independently of RANKL signaling pathways. This Bos taurus (Bovine) protein is Claudin-18 (CLDN18).